A 213-amino-acid polypeptide reads, in one-letter code: mRNA-decapping protein OPG121 (213 aa).

Residues glutamate 16 and arginine 50 each coordinate N(7)-methyl-GTP. A Nudix hydrolase domain is found at 30–209 (KDTHVFAACI…EYLSYIYNML (180 aa)). The Nudix box signature appears at 111-132 (GKLDKKESIKDCLRRELKEESD). Glutamate 126 serves as the catalytic Nucleophile. Mg(2+)-binding residues include glutamate 126 and glutamate 130. Position 151 (aspartate 151) interacts with N(7)-methyl-GTP. Glutamate 183 is a Mg(2+) binding site.

This sequence belongs to the Nudix hydrolase family. Mg(2+) is required as a cofactor. Requires Mn(2+) as cofactor.

It carries out the reaction a 5'-end (N(7)-methyl 5'-triphosphoguanosine)-guanosine in mRNA + H2O = a 5'-end phospho-guanosine in mRNA + N(7)-methyl-GDP + 2 H(+). Decapping enzyme that remove the protective 5'-cap from both host and viral mRNAs to commit transcripts for decay by the cellular exonuclease XRN1. Accelerates viral and cellular mRNA turnover to eliminate competing host mRNAs and allow stage-specific synthesis of viral proteins. Acceleration of the turnover of cellular transcripts may even promote the shutoff of host protein synthesis. The chain is mRNA-decapping protein OPG121 (OPG121) from Vaccinia virus (strain Western Reserve) (VACV).